Here is a 301-residue protein sequence, read N- to C-terminus: J domain-containing protein 1 (301 aa).

Residues 58–150 (TPYDIFGIPK…KKKIVYDTTR (93 aa)) form the J domain. The helical transmembrane segment at 208–228 (WTVIGIICGLAICIEGTALLA) threads the bilayer.

This sequence belongs to the DnaJ family.

Its subcellular location is the mitochondrion membrane. In terms of biological role, probable chaperone. The chain is J domain-containing protein 1 (JID1) from Saccharomyces cerevisiae (strain ATCC 204508 / S288c) (Baker's yeast).